A 337-amino-acid chain; its full sequence is Regulator of RpoS (337 aa).

One can recognise a Response regulatory domain in the interval 9–123 (QILIVEDEQV…NRLREMVFAC (115 aa)). At Asp58 the chain carries 4-aspartylphosphate.

Belongs to the RssB family. In terms of assembly, binds to RpoS. Post-translationally, phosphorylated. Phosphorylation stimulates the interaction with RpoS and, therefore, the proteolysis of RpoS.

Its function is as follows. Regulates the turnover of the sigma S factor (RpoS) by promoting its proteolysis in exponentially growing cells. Acts by binding and delivering RpoS to the ClpXP protease. RssB is not co-degraded with RpoS, but is released from the complex and can initiate a new cycle of RpoS recognition and degradation. The protein is Regulator of RpoS of Shigella flexneri.